A 278-amino-acid polypeptide reads, in one-letter code: MTVPSIVLNDGNSIPQLGYGVFKVPPADTQRAVEEALEVGYRHIDTAAIYGNEEGVGAAIAASGIARDDLFITTKLWNDRHDGDEPAAAIAESLAKLALDQVDLYLVHWPTPAADNYVHAWEKMIELRAAGLTRSIGVSNHLVPHLERIVAATGVVPAVNQIELHPAYQQREITDWAAAHDVKIESWGPLGQGKYDLFGAEPVTAAAAAHGKTPAQAVLRWHLQKGFVVFPKSVRRERLEENLDVFDFDLTDTEIAAIDAMDPGDGSGRVSAHPDEVD.

The Proton donor role is filled by Tyr50. Residue His108 participates in substrate binding. An NADP(+)-binding site is contributed by 188–242; it reads GPLGQGKYDLFGAEPVTAAAAAHGKTPAQAVLRWHLQKGFVVFPKSVRRERLEEN. The segment at 259 to 278 is disordered; sequence DAMDPGDGSGRVSAHPDEVD.

The protein belongs to the aldo/keto reductase family. In terms of assembly, monomer.

It is found in the cytoplasm. It carries out the reaction 2-dehydro-L-idonate + NADP(+) = 2,5-didehydro-D-gluconate + NADPH + H(+). Its activity is regulated as follows. Inhibited by Zn(2+), Fe(3+), Cu(2+) and Ni(2+). Its function is as follows. Catalyzes the reduction of 2,5-diketo-D-gluconic acid (25DKG) to 2-keto-L-gulonic acid (2KLG). 5-keto-D-fructose and dihydroxyacetone can also serve as substrates. 25DKGR-A exhibits a greater selectivity for the substrate and higher thermal stability than 25DKGR-B. In Corynebacterium sp. (strain ATCC 31090), this protein is 2,5-diketo-D-gluconic acid reductase A (dkgA).